Consider the following 554-residue polypeptide: Dihydroxy-acid dehydratase (554 aa).

A Mg(2+)-binding site is contributed by aspartate 78. Cysteine 119 serves as a coordination point for [2Fe-2S] cluster. 2 residues coordinate Mg(2+): aspartate 120 and lysine 121. At lysine 121 the chain carries N6-carboxylysine. Cysteine 191 lines the [2Fe-2S] cluster pocket. Glutamate 442 is a Mg(2+) binding site. Serine 468 serves as the catalytic Proton acceptor.

The protein belongs to the IlvD/Edd family. Homodimer. Requires [2Fe-2S] cluster as cofactor. It depends on Mg(2+) as a cofactor.

It catalyses the reaction (2R)-2,3-dihydroxy-3-methylbutanoate = 3-methyl-2-oxobutanoate + H2O. The enzyme catalyses (2R,3R)-2,3-dihydroxy-3-methylpentanoate = (S)-3-methyl-2-oxopentanoate + H2O. Its pathway is amino-acid biosynthesis; L-isoleucine biosynthesis; L-isoleucine from 2-oxobutanoate: step 3/4. It functions in the pathway amino-acid biosynthesis; L-valine biosynthesis; L-valine from pyruvate: step 3/4. Its function is as follows. Functions in the biosynthesis of branched-chain amino acids. Catalyzes the dehydration of (2R,3R)-2,3-dihydroxy-3-methylpentanoate (2,3-dihydroxy-3-methylvalerate) into 2-oxo-3-methylpentanoate (2-oxo-3-methylvalerate) and of (2R)-2,3-dihydroxy-3-methylbutanoate (2,3-dihydroxyisovalerate) into 2-oxo-3-methylbutanoate (2-oxoisovalerate), the penultimate precursor to L-isoleucine and L-valine, respectively. This chain is Dihydroxy-acid dehydratase, found in Thermotoga sp. (strain RQ2).